A 580-amino-acid polypeptide reads, in one-letter code: Pescadillo homolog (580 aa).

Over residues 291–303 (EPEEENEVDEFPA) the composition is skewed to acidic residues. The tract at residues 291–321 (EPEEENEVDEFPADPENAGQEEEQKKQLQEE) is disordered. Basic and acidic residues predominate over residues 312 to 321 (EEQKKQLQEE). In terms of domain architecture, BRCT spans 323-416 (KHKSMFVGLK…MLLPVEDYFP (94 aa)). Residues 448–496 (KGENPEDDDDDDEEDDEDEEEDDEDEDDEENEEEEEDKKLRHLENKKVG) are disordered. The span at 452-483 (PEDDDDDDEEDDEDEEEDDEDEDDEENEEEEE) shows a compositional bias: acidic residues. A compositionally biased stretch (basic and acidic residues) spans 484–494 (DKKLRHLENKK).

This sequence belongs to the pescadillo family. In terms of assembly, component of the PeBoW complex, composed of bop1, pes1 and wdr12. The complex is held together by bop1, which interacts with pes1 via its N-terminal domain and with wdr12 via a high-affinity interaction between the seven-bladed beta-propeller domains of the 2 proteins. The PeBoW complex associates with the 66S pre-ribosome.

It is found in the nucleus. The protein localises to the nucleolus. It localises to the nucleoplasm. Its function is as follows. Component of the PeBoW complex, which is required for maturation of 28S and 5.8S ribosomal RNAs and formation of the 60S ribosome. This chain is Pescadillo homolog (pes1), found in Xenopus tropicalis (Western clawed frog).